The chain runs to 400 residues: Deoxyhypusine synthase-like protein (400 aa).

The tract at residues 372 to 400 (KLGKEQMPEPQSTEPVATYPCGTPIKGRK) is disordered.

The protein belongs to the deoxyhypusine synthase family.

The polypeptide is Deoxyhypusine synthase-like protein (Cyanothece sp. (strain PCC 7425 / ATCC 29141)).